The sequence spans 542 residues: Mitochondrial distribution and morphology protein 34 (542 aa).

In terms of domain architecture, SMP-LTD spans Met-1–Gln-216. Disordered regions lie at residues Leu-27–Pro-58 and Ser-372–Val-435. The span at Thr-31–Thr-48 shows a compositional bias: low complexity. Over residues Asp-49–Pro-58 the composition is skewed to basic and acidic residues. A compositionally biased stretch (basic residues) spans Ile-379–Lys-394. A compositionally biased stretch (low complexity) spans Ser-403 to Ser-414.

Belongs to the MDM34 family. In terms of assembly, component of the ER-mitochondria encounter structure (ERMES) or MDM complex, composed of MMM1, MDM10, MDM12 and MDM34.

It localises to the mitochondrion outer membrane. Component of the ERMES/MDM complex, which serves as a molecular tether to connect the endoplasmic reticulum (ER) and mitochondria. Components of this complex are involved in the control of mitochondrial shape and protein biogenesis, and function in nonvesicular lipid trafficking between the ER and mitochondria. MDM34 is required for the interaction of the ER-resident membrane protein MMM1 and the outer mitochondrial membrane-resident beta-barrel protein MDM10. This is Mitochondrial distribution and morphology protein 34 from Lachancea thermotolerans (strain ATCC 56472 / CBS 6340 / NRRL Y-8284) (Yeast).